Here is a 254-residue protein sequence, read N- to C-terminus: Probable derlin-2 homolog (254 aa).

Residues 1-17 (MAQPFEDWYKNLPIVTK) lie on the Cytoplasmic side of the membrane. The chain crosses the membrane as a helical span at residues 18 to 38 (IYMTGCVVTSVSVYLGLVGPL). At 39 to 95 (RLYLNFPLVFGKYEFWRLFTNFFFYDEIGMNFFFHMYFLVRHSRLLEESSFRGRSAD) the chain is on the lumenal side. A helical membrane pass occupies residues 96–116 (YLFMWIFGSFLLLIMDAFLFY). Topologically, residues 117 to 118 (TK) are cytoplasmic. A helical transmembrane segment spans residues 119–139 (IVTKVLFLAPSIAFMVIYVWS). Topologically, residues 140–146 (RRNPNMH) are lumenal. The helical transmembrane segment at 147–167 (ISFLGLFTFSAPYLPWVILIM) threads the bilayer. The Cytoplasmic portion of the chain corresponds to 168 to 254 (GYLFNHDLTT…FLNEDDLDQQ (87 aa)).

This sequence belongs to the derlin family.

It is found in the endoplasmic reticulum membrane. Functionally, may be involved in the degradation process of specific misfolded endoplasmic reticulum (ER) luminal proteins. May also be involved in endoplasmic reticulum stress-induced pre-emptive quality control, a mechanism that selectively attenuates the translocation of newly synthesized proteins into the endoplasmic reticulum and reroutes them to the cytosol for proteasomal degradation. This Dictyostelium discoideum (Social amoeba) protein is Probable derlin-2 homolog (derl2).